A 1233-amino-acid chain; its full sequence is STE20-like serine/threonine-protein kinase (1233 aa).

Serine 14 bears the Phosphoserine mark. The 259-residue stretch at 34-292 folds into the Protein kinase domain; the sequence is WEIIGELGDG…TSQLLQHPFV (259 aa). ATP contacts are provided by residues 40–48 and lysine 63; that span reads LGDGAFGKV. The active-site Proton acceptor is aspartate 155. At threonine 183 the chain carries Phosphothreonine. Serine 189 carries the post-translational modification Phosphoserine. Residues 309–351 form a disordered region; that stretch reads AEVTEEVEDGKEEDEEEEAENALPIPANKRASSDLSIASSEED. A compositionally biased stretch (acidic residues) spans 312 to 328; sequence TEEVEDGKEEDEEEEAE. Phosphoserine occurs at positions 340, 341, 344, 347, 348, 354, and 372. A compositionally biased stretch (basic and acidic residues) spans 363 to 399; the sequence is VSERTEQSTSEDKFSNKILNEKPTTDGPEKAVDEHAS. Disordered regions lie at residues 363 to 453, 498 to 650, 663 to 761, and 772 to 791; these read VSER…ENNR, VSQE…SIEE, ALGS…SGDL, and AKDSGSVSLQETRRQKKTLK. Polar residues predominate over residues 432–441; that stretch reads PDTQDQQTVD. Residues 518-529 are compositionally biased toward basic and acidic residues; that stretch reads LTKEETQEKLGK. A phosphoserine mark is found at serine 543, serine 561, and serine 566. Basic and acidic residues predominate over residues 598–607; sequence GGERVEDKQP. A compositionally biased stretch (polar residues) spans 619-630; that stretch reads QLTSTSETTRAT. Serine 643, serine 647, and serine 666 each carry phosphoserine. Low complexity predominate over residues 690–701; it reads AESQAPAASQPS. Residues 746–761 show a composition bias toward polar residues; sequence TDSGTGSTVENSSGDL. A phosphoserine mark is found at serine 775 and serine 777. A Phosphothreonine modification is found at threonine 812. The residue at position 816 (serine 816) is a Phosphoserine. Residues 824–1067 adopt a coiled-coil conformation; the sequence is LRRQELRELR…LKNRQTQERA (244 aa). In terms of domain architecture, UVR spans 873–908; the sequence is DQEIENLEKQQKQTIERLEQEHTNRLRDEAKRIKGE. Residues 944–963 are disordered; the sequence is KRRKEELAQSQHAQEQEFVQ. Positions 954–963 are enriched in low complexity; it reads QHAQEQEFVQ. Phosphothreonine is present on threonine 1095. Positions 1107-1181 form a coiled coil; the sequence is AAQEEKRQKN…ELKEWREKLR (75 aa). Positions 1109 to 1129 are disordered; sequence QEEKRQKNERMAQHQKHESQM.

This sequence belongs to the protein kinase superfamily. STE Ser/Thr protein kinase family. STE20 subfamily. In terms of processing, proteolytically cleaved by caspase-3. Post-translationally, autophosphorylated. Ubiquitously expressed.

It localises to the cytoplasm. It catalyses the reaction L-seryl-[protein] + ATP = O-phospho-L-seryl-[protein] + ADP + H(+). It carries out the reaction L-threonyl-[protein] + ATP = O-phospho-L-threonyl-[protein] + ADP + H(+). Functionally, mediates apoptosis and actin stress fiber dissolution. The sequence is that of STE20-like serine/threonine-protein kinase (Slk) from Mus musculus (Mouse).